A 296-amino-acid chain; its full sequence is Nucleotide-binding protein M28_Spy0517 (296 aa).

Position 13 to 20 (13 to 20 (GMSGAGKT)) interacts with ATP. 63 to 66 (DMRS) serves as a coordination point for GTP.

Belongs to the RapZ-like family.

Functionally, displays ATPase and GTPase activities. The protein is Nucleotide-binding protein M28_Spy0517 of Streptococcus pyogenes serotype M28 (strain MGAS6180).